The following is a 335-amino-acid chain: NADH-quinone oxidoreductase subunit H (335 aa).

The next 8 membrane-spanning stretches (helical) occupy residues 11 to 31 (VILTVVKAIVILLAVVIAGAL), 81 to 101 (VIFTLAPVVAMSALLIAFAII), 114 to 134 (IGLLFFFAMAGLSVYAVLFAG), 154 to 174 (VSYEVFMGLALMGIVVQVGSF), 187 to 207 (LWFIIPQFFGFCTFFIAGVAV), 238 to 258 (FFVGEYIGIILISALLVTLFF), 270 to 290 (QLSFVWFALKTAFFIMLFILL), and 307 to 327 (WKFCLPLTLINLLITAAVVLW).

It belongs to the complex I subunit 1 family. In terms of assembly, NDH-1 is composed of 13 different subunits. Subunits NuoA, H, J, K, L, M, N constitute the membrane sector of the complex.

The protein localises to the cell inner membrane. It carries out the reaction a quinone + NADH + 5 H(+)(in) = a quinol + NAD(+) + 4 H(+)(out). Its function is as follows. NDH-1 shuttles electrons from NADH, via FMN and iron-sulfur (Fe-S) centers, to quinones in the respiratory chain. The immediate electron acceptor for the enzyme in this species is believed to be ubiquinone. Couples the redox reaction to proton translocation (for every two electrons transferred, four hydrogen ions are translocated across the cytoplasmic membrane), and thus conserves the redox energy in a proton gradient. This subunit may bind ubiquinone. The polypeptide is NADH-quinone oxidoreductase subunit H (Pseudomonas fluorescens (strain ATCC BAA-477 / NRRL B-23932 / Pf-5)).